The primary structure comprises 337 residues: Calcium-binding protein 39-like (337 aa).

This sequence belongs to the Mo25 family. As to quaternary structure, component of a trimeric complex composed of STK11/LKB1, STRAD (STRADA or STRADB) and CAB39/MO25 (CAB39/MO25alpha or CAB39L/MO25beta): the complex tethers STK11/LKB1 in the cytoplasm and stimulates its catalytic activity.

Functionally, component of a complex that binds and activates STK11/LKB1. In the complex, required to stabilize the interaction between CAB39/MO25 (CAB39/MO25alpha or CAB39L/MO25beta) and STK11/LKB1. The polypeptide is Calcium-binding protein 39-like (Cab39l) (Mus musculus (Mouse)).